The following is a 515-amino-acid chain: Histidine ammonia-lyase (515 aa).

Positions Ala145 to Gly147 form a cross-link, 5-imidazolinone (Ala-Gly). At Ser146 the chain carries 2,3-didehydroalanine (Ser).

It belongs to the PAL/histidase family. Post-translationally, contains an active site 4-methylidene-imidazol-5-one (MIO), which is formed autocatalytically by cyclization and dehydration of residues Ala-Ser-Gly.

The protein resides in the cytoplasm. The enzyme catalyses L-histidine = trans-urocanate + NH4(+). Its pathway is amino-acid degradation; L-histidine degradation into L-glutamate; N-formimidoyl-L-glutamate from L-histidine: step 1/3. This Gluconobacter oxydans (strain 621H) (Gluconobacter suboxydans) protein is Histidine ammonia-lyase.